Reading from the N-terminus, the 473-residue chain is Eukaryotic translation initiation factor 2 subunit gamma (473 aa).

Positions 40-250 (QATINIGTIG…AICNIAPPNY (211 aa)) constitute a tr-type G domain. The interval 49–56 (GHVAHGKS) is G1. 52 to 57 (AHGKSS) is a GTP binding site. Positions 77-81 (NITIK) are G2. Residues 135–138 (DCPG) form a G3 region. GTP-binding positions include 193–196 (NKMD) and 228–230 (SAQ). The G4 stretch occupies residues 193–196 (NKMD). A G5 region spans residues 228–230 (SAQ). The segment at 458-470 (GKVRSGGTLCEVV) is interacts with CDC123.

It belongs to the TRAFAC class translation factor GTPase superfamily. Classic translation factor GTPase family. EIF2G subfamily. Eukaryotic translation initiation factor 2 eIF2 is a heterotrimeric complex composed of an alpha, a beta and a gamma subunit. The factors eIF-1, eIF-2, eIF-3, TIF5/eIF-5 and methionyl-tRNAi form a multifactor complex (MFC) that may bind to the 40S ribosome.

It localises to the cytoplasm. The protein resides in the cytosol. It catalyses the reaction GTP + H2O = GDP + phosphate + H(+). As a subunit of eukaryotic initiation factor 2 eIF2, involved in the early steps of protein synthesis. In the presence of GTP, eIF-2 forms a ternary complex with initiator tRNA Met-tRNAi and then recruits the 40S ribosomal complex and initiation factors eIF-1, eIF-1A and eIF-3 to form the 43S pre-initiation complex (43S PIC), a step that determines the rate of protein translation. The 43S PIC binds to mRNA and scans downstream to the initiation codon, where it forms a 48S initiation complex by codon-anticodon base pairing. This leads to the displacement of eIF-1 to allow GTPase-activating protein (GAP) eIF-5-mediated hydrolysis of eIF2-bound GTP. Hydrolysis of GTP and release of Pi, which makes GTP hydrolysis irreversible, causes the release of the eIF-2-GDP binary complex from the 40S subunit, an event that is essential for the subsequent joining of the 60S ribosomal subunit to form an elongation-competent 80S ribosome. In order for eIF-2 to recycle and catalyze another round of initiation, the GDP bound to eIF-2 must be exchanged with GTP by way of a reaction catalyzed by GDP-GTP exchange factor (GEF) eIF-2B. This chain is Eukaryotic translation initiation factor 2 subunit gamma, found in Cryptococcus neoformans var. grubii serotype A (strain H99 / ATCC 208821 / CBS 10515 / FGSC 9487) (Filobasidiella neoformans var. grubii).